Here is a 333-residue protein sequence, read N- to C-terminus: Glycerol-3-phosphate dehydrogenase [NAD(P)+] 2 (333 aa).

Serine 12, tryptophan 13, arginine 32, and lysine 106 together coordinate NADPH. Sn-glycerol 3-phosphate-binding residues include lysine 106 and glycine 134. Residue alanine 138 coordinates NADPH. Residues lysine 189, aspartate 242, serine 252, arginine 253, and asparagine 254 each coordinate sn-glycerol 3-phosphate. Lysine 189 serves as the catalytic Proton acceptor. Position 253 (arginine 253) interacts with NADPH. NADPH is bound by residues valine 277 and glutamate 279.

This sequence belongs to the NAD-dependent glycerol-3-phosphate dehydrogenase family.

It is found in the cytoplasm. It catalyses the reaction sn-glycerol 3-phosphate + NAD(+) = dihydroxyacetone phosphate + NADH + H(+). The enzyme catalyses sn-glycerol 3-phosphate + NADP(+) = dihydroxyacetone phosphate + NADPH + H(+). It functions in the pathway membrane lipid metabolism; glycerophospholipid metabolism. Its function is as follows. Catalyzes the reduction of the glycolytic intermediate dihydroxyacetone phosphate (DHAP) to sn-glycerol 3-phosphate (G3P), the key precursor for phospholipid synthesis. In Sphingopyxis alaskensis (strain DSM 13593 / LMG 18877 / RB2256) (Sphingomonas alaskensis), this protein is Glycerol-3-phosphate dehydrogenase [NAD(P)+] 2.